The sequence spans 467 residues: Cobyrinate a,c-diamide synthase (467 aa).

The 194-residue stretch at 256–449 (RVGYAADQAF…AHIHVEGAPE (194 aa)) folds into the GATase cobBQ-type domain. Cysteine 338 serves as the catalytic Nucleophile.

Belongs to the CobB/CbiA family. Mg(2+) is required as a cofactor.

It carries out the reaction cob(II)yrinate + 2 L-glutamine + 2 ATP + 2 H2O = cob(II)yrinate a,c diamide + 2 L-glutamate + 2 ADP + 2 phosphate + 2 H(+). It functions in the pathway cofactor biosynthesis; adenosylcobalamin biosynthesis; cob(II)yrinate a,c-diamide from sirohydrochlorin (anaerobic route): step 10/10. Its function is as follows. Catalyzes the ATP-dependent amidation of the two carboxylate groups at positions a and c of cobyrinate, using either L-glutamine or ammonia as the nitrogen source. In Magnetococcus marinus (strain ATCC BAA-1437 / JCM 17883 / MC-1), this protein is Cobyrinate a,c-diamide synthase.